The following is a 1823-amino-acid chain: AF4/FMR2 family member lilli (1823 aa).

A compositionally biased stretch (low complexity) spans Met1–Asn41. Disordered stretches follow at residues Met1–Ile87, Gly126–Ile305, Gln422–Tyr544, Ala570–Ser626, Asp686–Gly712, Pro753–Thr1057, Ala1071–Arg1287, Ala1322–Thr1350, Phe1413–Leu1448, Glu1480–Ser1531, Thr1547–Leu1567, and Gly1715–Gln1744. Over residues Arg53–Asn79 the composition is skewed to basic and acidic residues. 3 stretches are compositionally biased toward low complexity: residues Gly126 to Ser147, Gln156 to Gln174, and Pro205 to Pro249. Over residues Pro426 to Ile438 the composition is skewed to pro residues. Thr434 is subject to Phosphothreonine. Basic and acidic residues predominate over residues Leu441–Ser454. Residues Leu456–Asp466 show a composition bias toward acidic residues. Phosphoserine is present on residues Ser463 and Ser465. The segment covering Ser475–Gln531 has biased composition (low complexity). Over residues Ala582 to Ser598 the composition is skewed to gly residues. Positions Ser599–Asn612 are enriched in low complexity. The segment covering Ser764–Ser785 has biased composition (low complexity). Residues His818–Leu827 are compositionally biased toward polar residues. Basic residues predominate over residues Pro839 to Met849. A phosphoserine mark is found at Ser859 and Ser860. Composition is skewed to low complexity over residues Ala877 to Ala906, Gln917 to Ala947, Gly962 to Gly979, Ala1002 to Thr1057, and Asn1102 to Gln1161. The segment at residues Lys908–Gln920 is a DNA-binding region (a.T hook). 2 positions are modified to phosphoserine: Ser939 and Ser941. The segment covering Thr1172–Leu1181 has biased composition (polar residues). Composition is skewed to low complexity over residues Ser1182–Ser1203 and Gln1253–Gln1280. Residues Thr1334–Ser1344 show a composition bias toward polar residues. Residues Glu1480–Arg1496 show a composition bias toward polar residues. Ser1486 is modified (phosphoserine). Low complexity predominate over residues Gln1497 to Ser1531. The segment covering Thr1555–Pro1565 has biased composition (pro residues). The segment covering Gly1715–Asn1735 has biased composition (low complexity).

Belongs to the AF4 family.

The protein localises to the nucleus. Functionally, has a role in transcriptional regulation. Acts in parallel with the Ras/MAPK and the PI3K/PKB pathways in the control of cell identity and cellular growth. Essential for regulation of the cytoskeleton and cell growth but not for cell proliferation or growth rate. Required specifically for the microtubule-based basal transport of lipid droplets. Plays a partially redundant function downstream of Raf in cell fate specification in the developing eye. Pair-rule protein that regulates embryonic cellularization, gastrulation and segmentation. The polypeptide is AF4/FMR2 family member lilli (Drosophila virilis (Fruit fly)).